We begin with the raw amino-acid sequence, 356 residues long: Putative zinc finger protein At1g68190 (356 aa).

Zn(2+)-binding residues include C14, C17, C37, H42, C57, C60, C80, and H85. The segment at C14–L56 adopts a B box-type 1; atypical zinc-finger fold. The B box-type 2; atypical zinc finger occupies C57 to L97. The disordered stretch occupies residues E159–K178.

It belongs to the CONSTANS family.

The protein resides in the nucleus. The chain is Putative zinc finger protein At1g68190 from Arabidopsis thaliana (Mouse-ear cress).